Consider the following 46-residue polypeptide: Hellethionin-D (46 aa).

Cystine bridges form between Cys3-Cys40, Cys4-Cys32, Cys12-Cys30, and Cys16-Cys26.

This sequence belongs to the plant thionin (TC 1.C.44) family. 4 C-C subfamily.

It localises to the secreted. Its function is as follows. Thionins are small plant proteins which are toxic to animal cells. They seem to exert their toxic effect at the level of the cell membrane. Their precise function is not known. The protein is Hellethionin-D of Helleborus purpurascens (Purple hellebore).